Reading from the N-terminus, the 698-residue chain is FHF complex subunit HOOK-interacting protein 2B (698 aa).

Belongs to the FHIP family.

The polypeptide is FHF complex subunit HOOK-interacting protein 2B (fhip2b) (Xenopus tropicalis (Western clawed frog)).